The following is a 105-amino-acid chain: MLIGYIFLTIAICSESIGAAMLKVSDGFKKWKPSALVVIGYSLAFYMLSLTLNHIPLSLSYATWSGAGTVLTTVIGVKWFKEDLNAKGLIGILLLLSGVVLLNWP.

4 consecutive transmembrane segments (helical) span residues 2 to 22, 35 to 55, 57 to 77, and 84 to 104; these read LIGY…AAML, ALVV…LNHI, LSLS…VIGV, and LNAK…LLNW.

It belongs to the drug/metabolite transporter (DMT) superfamily. Small multidrug resistance (SMR) (TC 2.A.7.1) family. EbrA/EbrB subfamily. The efflux pump is composed of EbrA and EbrB.

It localises to the cell membrane. Part of a multidrug efflux pump. Confers resistance to cationic lipophilic dyes such as ethidium bromide, acriflavine, pyronine Y and safranin O. The efflux is probably coupled to an influx of protons. This chain is Multidrug resistance protein EbrA (ebrA), found in Bacillus subtilis (strain 168).